A 441-amino-acid chain; its full sequence is Capsid protein (441 aa).

The segment at 26–63 (DSKKKQPIYQNSSESEESETENKNFIYDFSSEEDFEEP) is disordered. The Nuclear localization signal signature appears at 77–79 (KRK). A CCHC-type zinc finger spans residues 381–398 (CQCWLCHEEGHYANECPK).

The protein belongs to the caulimoviridae capsid protein family. As to quaternary structure, interacts (via nuclear localization signal) with host importin alpha.

Its subcellular location is the virion. The protein localises to the host nucleus. In terms of biological role, self assembles to form an icosahedral capsid, about 50 nm in diameter, nm, composed of 420 subunits of the viral capsid protein. The capsid encapsulates the genomic dsDNA. Following virus entry into host cell, provides nuclear import of the viral genome. Virus particles do not enter the nucleus, but dock at the nuclear membrane through the interaction with host importins. The chain is Capsid protein from Soybean chlorotic mottle virus.